The chain runs to 367 residues: tRNA-specific 2-thiouridylase MnmA (367 aa).

ATP is bound by residues 12–19 and Met38; that span reads GMSGGVDS. The interval 98 to 100 is interaction with target base in tRNA; that stretch reads NPD. Catalysis depends on Cys103, which acts as the Nucleophile. A disulfide bridge links Cys103 with Cys200. Residue Gly128 coordinates ATP. The interval 150-152 is interaction with tRNA; the sequence is KDQ. Residue Cys200 is the Cysteine persulfide intermediate of the active site. Residues 312-313 form an interaction with tRNA region; the sequence is RY.

Belongs to the MnmA/TRMU family. As to quaternary structure, interacts with TusE.

It is found in the cytoplasm. It carries out the reaction S-sulfanyl-L-cysteinyl-[protein] + uridine(34) in tRNA + AH2 + ATP = 2-thiouridine(34) in tRNA + L-cysteinyl-[protein] + A + AMP + diphosphate + H(+). Its function is as follows. Catalyzes the 2-thiolation of uridine at the wobble position (U34) of tRNA(Lys), tRNA(Glu) and tRNA(Gln), leading to the formation of s(2)U34, the first step of tRNA-mnm(5)s(2)U34 synthesis. Sulfur is provided by IscS, via a sulfur-relay system. Binds ATP and its substrate tRNAs. The chain is tRNA-specific 2-thiouridylase MnmA from Serratia proteamaculans (strain 568).